The sequence spans 470 residues: Ribulose bisphosphate carboxylase large chain (470 aa).

Residues Asn118 and Thr168 each contribute to the substrate site. Lys170 acts as the Proton acceptor in catalysis. Residue Lys172 coordinates substrate. Mg(2+) contacts are provided by Lys196, Asp198, and Glu199. Position 196 is an N6-carboxylysine (Lys196). His289 functions as the Proton acceptor in the catalytic mechanism. Substrate is bound by residues Arg290, His322, and Ser374.

The protein belongs to the RuBisCO large chain family. Type I subfamily. Heterohexadecamer of 8 large chains and 8 small chains; disulfide-linked. The disulfide link is formed within the large subunit homodimers. RuBisCO interacts with the C-terminus of CcmM, and can be found in complexes that also include carbonic anhydrase (ccaA). RuBisCO associates with both the internal and shell portion of carboxysomes. It depends on Mg(2+) as a cofactor. In terms of processing, the disulfide bond which can form in the large chain dimeric partners within the hexadecamer appears to be associated with oxidative stress and protein turnover.

It localises to the carboxysome. The enzyme catalyses 2 (2R)-3-phosphoglycerate + 2 H(+) = D-ribulose 1,5-bisphosphate + CO2 + H2O. It carries out the reaction D-ribulose 1,5-bisphosphate + O2 = 2-phosphoglycolate + (2R)-3-phosphoglycerate + 2 H(+). Its function is as follows. RuBisCO catalyzes two reactions: the carboxylation of D-ribulose 1,5-bisphosphate, the primary event in carbon dioxide fixation, as well as the oxidative fragmentation of the pentose substrate in the photorespiration process. Both reactions occur simultaneously and in competition at the same active site. The sequence is that of Ribulose bisphosphate carboxylase large chain from Synechocystis sp. (strain ATCC 27184 / PCC 6803 / Kazusa).